We begin with the raw amino-acid sequence, 329 residues long: MTSIAIDAMGGDFGEKPIIEGVIQALKEREFKAILVGDPQKLKTLIPQELNSYIEYEEAFDVFAMDENSTDALKRKDSTIYKAIDLVRNQKAKAIVSAGHSGATMSLATLRLGRLANIARPAIATLMPNIHSRTLVLDVGANVDCKSEHLFQFAIMGEAYAKEILKIAKPRVALLSNGEEECKGNELTKETHQLLKQLPNFVGNAEGRDIFNGTIDVLVCDGFNGNILLKTGEGVASVITKLLKQEIQKSFLAKLGYLLAKPAFNELKTHIDYEEYGGAPLLGVKECVIISHGKSGPKAIKNAIFQALNFTQSNINQTIEKELSNYEIN.

Belongs to the PlsX family. As to quaternary structure, homodimer. Probably interacts with PlsY.

Its subcellular location is the cytoplasm. It carries out the reaction a fatty acyl-[ACP] + phosphate = an acyl phosphate + holo-[ACP]. It functions in the pathway lipid metabolism; phospholipid metabolism. Catalyzes the reversible formation of acyl-phosphate (acyl-PO(4)) from acyl-[acyl-carrier-protein] (acyl-ACP). This enzyme utilizes acyl-ACP as fatty acyl donor, but not acyl-CoA. In Campylobacter lari (strain RM2100 / D67 / ATCC BAA-1060), this protein is Phosphate acyltransferase.